The sequence spans 81 residues: NADH-ubiquinone oxidoreductase chain 6 (81 aa).

3 consecutive transmembrane segments (helical) span residues 1 to 21 (MTYF…GVAS), 27 to 47 (YGVV…LSLG), and 48 to 68 (VSFV…VVFV).

This sequence belongs to the complex I subunit 6 family.

The protein localises to the mitochondrion membrane. The catalysed reaction is a ubiquinone + NADH + 5 H(+)(in) = a ubiquinol + NAD(+) + 4 H(+)(out). In terms of biological role, core subunit of the mitochondrial membrane respiratory chain NADH dehydrogenase (Complex I) that is believed to belong to the minimal assembly required for catalysis. Complex I functions in the transfer of electrons from NADH to the respiratory chain. The immediate electron acceptor for the enzyme is believed to be ubiquinone. The chain is NADH-ubiquinone oxidoreductase chain 6 (MT-ND6) from Anas platyrhynchos (Mallard).